A 470-amino-acid polypeptide reads, in one-letter code: UDP-N-acetylmuramate--L-alanine ligase (470 aa).

114-120 is an ATP binding site; it reads GTHGKTT.

Belongs to the MurCDEF family.

The protein localises to the cytoplasm. The enzyme catalyses UDP-N-acetyl-alpha-D-muramate + L-alanine + ATP = UDP-N-acetyl-alpha-D-muramoyl-L-alanine + ADP + phosphate + H(+). It functions in the pathway cell wall biogenesis; peptidoglycan biosynthesis. In terms of biological role, cell wall formation. In Xanthobacter autotrophicus (strain ATCC BAA-1158 / Py2), this protein is UDP-N-acetylmuramate--L-alanine ligase.